We begin with the raw amino-acid sequence, 374 residues long: uncharacterized protein (374 aa).

A helical membrane pass occupies residues Ala27–Tyr49.

The protein localises to the membrane. This is an uncharacterized protein from Methanocaldococcus jannaschii (strain ATCC 43067 / DSM 2661 / JAL-1 / JCM 10045 / NBRC 100440) (Methanococcus jannaschii).